A 235-amino-acid polypeptide reads, in one-letter code: MNKTQENALKALQQGFVASCQPVDDGPMDSPMIVAAMAQAAVAGGVAGIRIEGIENVKAVRPHVNVPIIGIIKRDLEHSDVRITPFIEDVYALKAAGADVIAIDATHRVRPTSVEDLIDAIHSVGCLAMADCSTYDEGMYCQARGVQIIGSTLSGYTGGPVPAEPDFDLITRLKQAGCRVMAEGRFNTPELAGKAIEAGAFCVTVGSAITRVEHICSWFQAEVEHAHQAQSEAVA.

Belongs to the NanE family.

The catalysed reaction is an N-acyl-D-glucosamine 6-phosphate = an N-acyl-D-mannosamine 6-phosphate. It participates in amino-sugar metabolism; N-acetylneuraminate degradation; D-fructose 6-phosphate from N-acetylneuraminate: step 3/5. Converts N-acetylmannosamine-6-phosphate (ManNAc-6-P) to N-acetylglucosamine-6-phosphate (GlcNAc-6-P). The polypeptide is Putative N-acetylmannosamine-6-phosphate 2-epimerase (Photobacterium profundum (strain SS9)).